The following is a 329-amino-acid chain: Ig gamma-2 chain C region (329 aa).

3 disulfides stabilise this stretch: Cys28–Cys79, Cys142–Cys202, and Cys248–Cys308. An N-linked (GlcNAc...) asparagine glycan is attached at Asn178.

The protein localises to the secreted. The sequence is that of Ig gamma-2 chain C region from Cavia porcellus (Guinea pig).